Reading from the N-terminus, the 114-residue chain is Flagellar transcriptional regulator FlhD (114 aa).

The protein belongs to the FlhD family. Homodimer; disulfide-linked. Forms a heterohexamer composed of two FlhC and four FlhD subunits. Each FlhC binds a FlhD dimer, forming a heterotrimer, and a hexamer assembles by dimerization of two heterotrimers.

It localises to the cytoplasm. Functions in complex with FlhC as a master transcriptional regulator that regulates transcription of several flagellar and non-flagellar operons by binding to their promoter region. Activates expression of class 2 flagellar genes, including fliA, which is a flagellum-specific sigma factor that turns on the class 3 genes. Also regulates genes whose products function in a variety of physiological pathways. This chain is Flagellar transcriptional regulator FlhD, found in Wigglesworthia glossinidia brevipalpis.